Reading from the N-terminus, the 532-residue chain is Bifunctional purine biosynthesis protein PurH (532 aa).

One can recognise an MGS-like domain in the interval 1-147; the sequence is MAKIKRALIS…KNYRSVTVVT (147 aa).

Belongs to the PurH family.

The enzyme catalyses (6R)-10-formyltetrahydrofolate + 5-amino-1-(5-phospho-beta-D-ribosyl)imidazole-4-carboxamide = 5-formamido-1-(5-phospho-D-ribosyl)imidazole-4-carboxamide + (6S)-5,6,7,8-tetrahydrofolate. It carries out the reaction IMP + H2O = 5-formamido-1-(5-phospho-D-ribosyl)imidazole-4-carboxamide. It functions in the pathway purine metabolism; IMP biosynthesis via de novo pathway; 5-formamido-1-(5-phospho-D-ribosyl)imidazole-4-carboxamide from 5-amino-1-(5-phospho-D-ribosyl)imidazole-4-carboxamide (10-formyl THF route): step 1/1. The protein operates within purine metabolism; IMP biosynthesis via de novo pathway; IMP from 5-formamido-1-(5-phospho-D-ribosyl)imidazole-4-carboxamide: step 1/1. The sequence is that of Bifunctional purine biosynthesis protein PurH from Magnetococcus marinus (strain ATCC BAA-1437 / JCM 17883 / MC-1).